A 187-amino-acid polypeptide reads, in one-letter code: Protein GrpE (187 aa).

Over residues 1 to 11 the composition is skewed to basic and acidic residues; sequence MTDSSNEHETE. Residues 1–23 form a disordered region; the sequence is MTDSSNEHETENPSVPNPDNEIQ.

This sequence belongs to the GrpE family. As to quaternary structure, homodimer.

The protein localises to the cytoplasm. In terms of biological role, participates actively in the response to hyperosmotic and heat shock by preventing the aggregation of stress-denatured proteins, in association with DnaK and GrpE. It is the nucleotide exchange factor for DnaK and may function as a thermosensor. Unfolded proteins bind initially to DnaJ; upon interaction with the DnaJ-bound protein, DnaK hydrolyzes its bound ATP, resulting in the formation of a stable complex. GrpE releases ADP from DnaK; ATP binding to DnaK triggers the release of the substrate protein, thus completing the reaction cycle. Several rounds of ATP-dependent interactions between DnaJ, DnaK and GrpE are required for fully efficient folding. In Chlamydia felis (strain Fe/C-56) (Chlamydophila felis), this protein is Protein GrpE.